The sequence spans 463 residues: Argininosuccinate lyase (463 aa).

The protein belongs to the lyase 1 family. Argininosuccinate lyase subfamily.

It is found in the cytoplasm. The catalysed reaction is 2-(N(omega)-L-arginino)succinate = fumarate + L-arginine. It functions in the pathway amino-acid biosynthesis; L-arginine biosynthesis; L-arginine from L-ornithine and carbamoyl phosphate: step 3/3. In Streptococcus pneumoniae serotype 2 (strain D39 / NCTC 7466), this protein is Argininosuccinate lyase.